A 528-amino-acid polypeptide reads, in one-letter code: GMP synthase [glutamine-hydrolyzing] (528 aa).

The Glutamine amidotransferase type-1 domain occupies 13-204 (SILILDFGSQ…VYKISCCAAD (192 aa)). Cysteine 90 acts as the Nucleophile in catalysis. Catalysis depends on residues histidine 178 and glutamate 180. The 199-residue stretch at 205-403 (WTTETYIEET…LGLPAEIIKR (199 aa)) folds into the GMPS ATP-PPase domain. 232–238 (SGGVDSS) contributes to the ATP binding site.

Homodimer.

It carries out the reaction XMP + L-glutamine + ATP + H2O = GMP + L-glutamate + AMP + diphosphate + 2 H(+). Its pathway is purine metabolism; GMP biosynthesis; GMP from XMP (L-Gln route): step 1/1. Functionally, catalyzes the synthesis of GMP from XMP. In Prochlorococcus marinus (strain MIT 9215), this protein is GMP synthase [glutamine-hydrolyzing].